The following is a 306-amino-acid chain: Glutaminase (306 aa).

Positions 61, 111, 157, 164, 188, 240, and 258 each coordinate substrate.

It belongs to the glutaminase family. As to quaternary structure, homotetramer.

It carries out the reaction L-glutamine + H2O = L-glutamate + NH4(+). The protein is Glutaminase of Pseudoalteromonas atlantica (strain T6c / ATCC BAA-1087).